The chain runs to 263 residues: uncharacterized protein (263 aa).

One can recognise a DOD-type homing endonuclease domain in the interval 107-246 (ILGVLNGDGS…CCSFLEKLGI (140 aa)).

This is an uncharacterized protein from Methanocaldococcus jannaschii (strain ATCC 43067 / DSM 2661 / JAL-1 / JCM 10045 / NBRC 100440) (Methanococcus jannaschii).